We begin with the raw amino-acid sequence, 532 residues long: MAPSSPRPALPALLVLLGALFPGPGNAQTSVSPPKVILPRGGSVQVTCSTSCDQPDLLGIETPLPKKELLLGGNNWKVYELSNVQEDSQPMCYSNCPDGQSTAKTFLTVYWTPERVELAPLPSWQPVGKDLTLRCQVEGGAPRANLTVVLLRGEKELKREPAVGEPAEVTTTVLVERDHHGANFSCRTELDLRPQGLQLFENTSAPHQLQTFVLPATPPQLVSPRVLEVDTQGTVVCSLDGLFPVLEAQVHLALGDQRLNPTVTYGNDSFSAKASVSVTAEDEGTQRLTCAVILGNQSRETLQTVTIYSFPAPNVILTKPEVSEGTEVTVKCEAHPRAKVTLNGVPAQPVGPRVQLLLKATPEDNGRSFSCSATLEVAGQLIHKNQTRELRVLYGPRLDERDCPGNWTWPENSQQTPMCQASGNPLPELKCLKDGTFPLPVGESVTVTRDLEGTYLCRARSTQGEVTRKVTVNVLSPRYEIVIITVVAAAVIMGTAGLSTYLYNRQRKIRKYRLQQAQKGTPMKPNTQATPP.

Residues 1–27 (MAPSSPRPALPALLVLLGALFPGPGNA) form the signal peptide. Residues 28–480 (QTSVSPPKVI…TVNVLSPRYE (453 aa)) lie on the Extracellular side of the membrane. Ig-like C2-type domains follow at residues 41–103 (GGSV…QSTA) and 128–193 (GKDL…LDLR). Disulfide bonds link cysteine 48-cysteine 92, cysteine 52-cysteine 96, and cysteine 135-cysteine 186. Asparagine 145 is a glycosylation site (N-linked (GlcNAc...) asparagine). A Cell attachment site; atypical motif is present at residues 152–154 (RGE). Residues asparagine 183, asparagine 202, asparagine 267, and asparagine 296 are each glycosylated (N-linked (GlcNAc...) asparagine). 2 Ig-like C2-type domains span residues 230 to 297 (DTQG…LGNQ) and 325 to 378 (GTEV…LEVA). Cysteine 237 and cysteine 290 are oxidised to a cystine. A disulfide bridge connects residues cysteine 332 and cysteine 371. 2 N-linked (GlcNAc...) asparagine glycosylation sites follow: asparagine 385 and asparagine 406. 3 cysteine pairs are disulfide-bonded: cysteine 403/cysteine 419, cysteine 419/cysteine 457, and cysteine 431/cysteine 457. Residues 412 to 464 (NSQQTPMCQASGNPLPELKCLKDGTFPLPVGESVTVTRDLEGTYLCRARSTQG) enclose the Ig-like C2-type 5 domain. The chain crosses the membrane as a helical span at residues 481–503 (IVIITVVAAAVIMGTAGLSTYLY). Topologically, residues 504 to 532 (NRQRKIRKYRLQQAQKGTPMKPNTQATPP) are cytoplasmic. 2 positions are modified to phosphothreonine: threonine 521 and threonine 530.

Belongs to the immunoglobulin superfamily. ICAM family. As to quaternary structure, homodimer. Interacts with MUC1 and promotes cell aggregation in epithelial cells. Interacts with ARHGEF26/SGEF. Interacts (on T cell side) with CD81, CD247 and CD9 at immunological synapses between antigen-presenting cells and T cells. Post-translationally, monoubiquitinated, which is promoted by MARCH9 and leads to endocytosis.

It localises to the membrane. Functionally, ICAM proteins are ligands for the leukocyte adhesion protein LFA-1 (integrin alpha-L/beta-2). During leukocyte trans-endothelial migration, ICAM1 engagement promotes the assembly of endothelial apical cups through ARHGEF26/SGEF and RHOG activation. The sequence is that of Intercellular adhesion molecule 1 (ICAM1) from Pan troglodytes (Chimpanzee).